The sequence spans 163 residues: Deoxyuridine 5'-triphosphate nucleotidohydrolase (163 aa).

Substrate-binding positions include 78–80, N91, and 95–97; these read RSG and TVD. Positions 140–151 are enriched in basic and acidic residues; it reads ERESLNETERGD. The interval 140 to 163 is disordered; that stretch reads ERESLNETERGDGGFGHTGVNSQP.

This sequence belongs to the dUTPase family. The cofactor is Mg(2+).

The catalysed reaction is dUTP + H2O = dUMP + diphosphate + H(+). The protein operates within pyrimidine metabolism; dUMP biosynthesis; dUMP from dCTP (dUTP route): step 2/2. Functionally, this enzyme is involved in nucleotide metabolism: it produces dUMP, the immediate precursor of thymidine nucleotides and it decreases the intracellular concentration of dUTP so that uracil cannot be incorporated into DNA. The chain is Deoxyuridine 5'-triphosphate nucleotidohydrolase from Heliobacterium modesticaldum (strain ATCC 51547 / Ice1).